The primary structure comprises 366 residues: MTSTENNNNGSDETQTTKLHFEDADESMHDGDDNNADVADDITSADYYFDSYSHFGIHEEMLKDVVRTKSYQDVIYKNKFLIKDKIVLDVGAGTGILSLFCAKAGAAHVYAVECSQMADTAKEIVKSNGFSDVITVLKGKIEEIELPVPKVDVIISEWMGYFLLYENMLDTVLYARNKWLVDGGIVLPDKASLYVTAIEDAHYKDDKVEFWDDVYGFDMSCIKRRAITEPLVDTVDGNQIVTDSKLLKTMDISKMAAGDASFTAPFKLVAQRNDHIHALVAYFDVSFTMCHKKMGFSTGPKSRATHWKQTVLYLEDVLTICEGETITGSMTIAQNKKNPRDVDIKLSYSLNGQHCNISRTHFYKMR.

The SAM-dependent MTase PRMT-type domain occupies 45–347; the sequence is ADYYFDSYSH…NPRDVDIKLS (303 aa). Catalysis depends on residues E157 and E166.

It belongs to the class I-like SAM-binding methyltransferase superfamily. Protein arginine N-methyltransferase family. Interacts with FIB2 and PRMT11.

It is found in the nucleus. It localises to the cytoplasm. In terms of biological role, methylates (mono and asymmetric dimethylation) the guanidino nitrogens of arginyl residues present in a glycine and arginine-rich domain. Type I arginine methyltransferase active on both histones and non-histone proteins. Mediates the methylation of MED36A. The polypeptide is Probable protein arginine N-methyltransferase 1.2 (PRMT12) (Arabidopsis thaliana (Mouse-ear cress)).